The following is a 377-amino-acid chain: DNA-directed RNA polymerase subunit alpha (377 aa).

Positions 1-259 (MSDSSHNLLY…KHFSVFEKMD (259 aa)) are alpha N-terminal domain (alpha-NTD). Residues 279–377 (ILHKLVLGIN…KIRSSKNTKG (99 aa)) are alpha C-terminal domain (alpha-CTD).

This sequence belongs to the RNA polymerase alpha chain family. As to quaternary structure, homodimer. The RNAP catalytic core consists of 2 alpha, 1 beta, 1 beta' and 1 omega subunit. When a sigma factor is associated with the core the holoenzyme is formed, which can initiate transcription.

It catalyses the reaction RNA(n) + a ribonucleoside 5'-triphosphate = RNA(n+1) + diphosphate. Functionally, DNA-dependent RNA polymerase catalyzes the transcription of DNA into RNA using the four ribonucleoside triphosphates as substrates. The sequence is that of DNA-directed RNA polymerase subunit alpha from Chlamydia trachomatis serovar L2 (strain ATCC VR-902B / DSM 19102 / 434/Bu).